We begin with the raw amino-acid sequence, 145 residues long: ATP synthase epsilon chain (145 aa).

It belongs to the ATPase epsilon chain family. In terms of assembly, F-type ATPases have 2 components, CF(1) - the catalytic core - and CF(0) - the membrane proton channel. CF(1) has five subunits: alpha(3), beta(3), gamma(1), delta(1), epsilon(1). CF(0) has three main subunits: a, b and c.

The protein localises to the cell inner membrane. In terms of biological role, produces ATP from ADP in the presence of a proton gradient across the membrane. The polypeptide is ATP synthase epsilon chain (Francisella tularensis subsp. mediasiatica (strain FSC147)).